The following is a 429-amino-acid chain: Histidine--tRNA ligase (429 aa).

Belongs to the class-II aminoacyl-tRNA synthetase family. As to quaternary structure, homodimer.

Its subcellular location is the cytoplasm. The enzyme catalyses tRNA(His) + L-histidine + ATP = L-histidyl-tRNA(His) + AMP + diphosphate + H(+). The sequence is that of Histidine--tRNA ligase from Streptococcus pneumoniae (strain CGSP14).